The following is an 826-amino-acid chain: Hyaluronate lyase HylA (826 aa).

A signal peptide (tat-type signal) is located at residues 1 to 36 (MFDIPYQVPSRRTFLSLSALSAIAIAASPEMPDAFA). Active-site residues include His-276, Tyr-285, and Arg-339. Residues 800–826 (LSPALPKPTKPSLRASSYPLGLPHTSS) are disordered.

It belongs to the polysaccharide lyase 8 family. In terms of processing, predicted to be exported by the Tat system. The position of the signal peptide cleavage has not been experimentally proven.

Its subcellular location is the secreted. The catalysed reaction is [hyaluronan](n) = n 3-(4-deoxy-beta-D-gluc-4-enuronosyl)-N-acetyl-D-glucosamine + H2O. Degrades hyaluronic acid (HA) into large-sized HA oligosaccharides, including tetrasaccharide HA (HA-4), hexasaccharide HA (HA-6) and higher molecular weight HA, and to a lesser extent into HA disaccharides (HA-2). Involved in the pathogenesis of acne. HA degradation products induce secretion of proinflammatory cytokines (IL-6, IL-8 and TNF-alpha) from human HaCaT keratinocyte cell line and from mouse bone marrow derived macrophages (BMDMs). Produced HA fragments also direct robust TLR2-dependent inflammation in the mouse model of acne. The polypeptide is Hyaluronate lyase HylA (Cutibacterium acnes (Propionibacterium acnes)).